A 705-amino-acid chain; its full sequence is Beta-xylosidase (705 aa).

It belongs to the glycosyl hydrolase 52 family.

The enzyme catalyses Hydrolysis of (1-&gt;4)-beta-D-xylans, to remove successive D-xylose residues from the non-reducing termini.. It functions in the pathway glycan degradation; xylan degradation. This Geobacillus stearothermophilus (Bacillus stearothermophilus) protein is Beta-xylosidase (xylA).